Here is a 751-residue protein sequence, read N- to C-terminus: Polyribonucleotide nucleotidyltransferase (751 aa).

Mg(2+) is bound by residues D528 and D534. Positions 594 to 653 (PRVISVTVPVSKIGEVIGPKGKMINQIQEDTGTDISIEDDGTVYIGATDGPSAEAARSAI) constitute a KH domain. Residues 665-737 (GERYLGTVVK…DRGKLSLAPV (73 aa)) enclose the S1 motif domain.

This sequence belongs to the polyribonucleotide nucleotidyltransferase family. Mg(2+) serves as cofactor.

It is found in the cytoplasm. It catalyses the reaction RNA(n+1) + phosphate = RNA(n) + a ribonucleoside 5'-diphosphate. Functionally, involved in mRNA degradation. Catalyzes the phosphorolysis of single-stranded polyribonucleotides processively in the 3'- to 5'-direction. This chain is Polyribonucleotide nucleotidyltransferase, found in Kocuria rhizophila (strain ATCC 9341 / DSM 348 / NBRC 103217 / DC2201).